Reading from the N-terminus, the 514-residue chain is ATP synthase subunit alpha (514 aa).

An ATP-binding site is contributed by Gly-170–Thr-177.

It belongs to the ATPase alpha/beta chains family. F-type ATPases have 2 components, CF(1) - the catalytic core - and CF(0) - the membrane proton channel. CF(1) has five subunits: alpha(3), beta(3), gamma(1), delta(1), epsilon(1). CF(0) has three main subunits: a(1), b(2) and c(9-12). The alpha and beta chains form an alternating ring which encloses part of the gamma chain. CF(1) is attached to CF(0) by a central stalk formed by the gamma and epsilon chains, while a peripheral stalk is formed by the delta and b chains.

Its subcellular location is the cell inner membrane. It carries out the reaction ATP + H2O + 4 H(+)(in) = ADP + phosphate + 5 H(+)(out). Functionally, produces ATP from ADP in the presence of a proton gradient across the membrane. The alpha chain is a regulatory subunit. The chain is ATP synthase subunit alpha from Acidithiobacillus ferrooxidans (strain ATCC 23270 / DSM 14882 / CIP 104768 / NCIMB 8455) (Ferrobacillus ferrooxidans (strain ATCC 23270)).